We begin with the raw amino-acid sequence, 140 residues long: Large ribosomal subunit protein uL13 (140 aa).

The protein belongs to the universal ribosomal protein uL13 family. Part of the 50S ribosomal subunit.

Functionally, this protein is one of the early assembly proteins of the 50S ribosomal subunit, although it is not seen to bind rRNA by itself. It is important during the early stages of 50S assembly. The sequence is that of Large ribosomal subunit protein uL13 from Sulfurimonas denitrificans (strain ATCC 33889 / DSM 1251) (Thiomicrospira denitrificans (strain ATCC 33889 / DSM 1251)).